Here is a 354-residue protein sequence, read N- to C-terminus: Protein-arginine kinase (354 aa).

Residues 24-254 enclose the Phosphagen kinase C-terminal domain; that stretch reads IVLSSRIRLA…QQIIQQEKMA (231 aa). ATP-binding positions include 27–31, histidine 92, arginine 125, 176–180, and 207–212; these read SSRIR, RASVM, and RGIYGE. The RDXXRA motif of the pArg binding pocket involved in allosteric regulation motif lies at 337-342; the sequence is RDYRRA.

This sequence belongs to the ATP:guanido phosphotransferase family.

The enzyme catalyses L-arginyl-[protein] + ATP = N(omega)-phospho-L-arginyl-[protein] + ADP + H(+). Appears to be allosterically activated by the binding of pArg-containing polypeptides to the pArg-binding pocket localized in the C-terminal domain of McsB. Its function is as follows. Catalyzes the specific phosphorylation of arginine residues in a large number of proteins. Is part of the bacterial stress response system. Protein arginine phosphorylation has a physiologically important role and is involved in the regulation of many critical cellular processes, such as protein homeostasis, motility, competence, and stringent and stress responses, by regulating gene expression and protein activity. The chain is Protein-arginine kinase from Bacillus cereus (strain AH187).